Here is a 200-residue protein sequence, read N- to C-terminus: High mobility group protein B3 (200 aa).

Lys3 is subject to N6-acetyllysine. 2 consecutive DNA-binding regions (HMG box) follow at residues 9–79 (PKGK…KDYG) and 93–161 (PKRP…ADYK). Cys23 is modified (cysteine sulfonic acid (-SO3H); alternate). Cysteines 23 and 45 form a disulfide. Residues Lys30 and Lys43 each carry the N6-acetyllysine modification. Cys45 carries the post-translational modification Cysteine sulfonic acid (-SO3H); alternate. The interval 71 to 97 (YDREMKDYGPAKGGKKKKDPNAPKRPP) is disordered. The residue at position 98 (Ser98) is a Phosphoserine. Cys104 carries the post-translational modification Cysteine sulfonic acid (-SO3H). An N6-acetyllysine mark is found at Lys112 and Lys139. Positions 161–200 (KSKGKFDGAKGPAKVARKKVEEEEEEEEEEEEEEEEEEDE) are disordered. Positions 182 to 200 (EEEEEEEEEEEEEEEEEDE) are enriched in acidic residues.

It belongs to the HMGB family. Reduction/oxidation of cysteine residues Cys-23, Cys-45 and Cys-104 and a possible intramolecular disulfide bond involving Cys-23 and Cys-45 give rise to different redox forms with specific functional activities in various cellular compartments: 1- fully reduced HMGB3 (HMGB3C23hC45hC104h), 2- disulfide HMGB3 (HMGB3C23-C45C104h) and 3- sulfonyl HMGB3 (HMGB3C23soC45soC104so). In terms of tissue distribution, expressed in bone marrow cells, specifically in primitive Lin-, c-kit+, Sca-1+, IL-7Ralpha- cells, and Ter119+ erythroid cells.

It is found in the nucleus. Its subcellular location is the chromosome. It localises to the cytoplasm. Functionally, multifunctional protein with various roles in different cellular compartments. May act in a redox sensitive manner. Associates with chromatin and binds DNA with a preference for non-canonical DNA structures such as single-stranded DNA. Can bend DNA and enhance DNA flexibility by looping thus providing a mechanism to promote activities on various gene promoters. Proposed to be involved in the innate immune response to nucleic acids by acting as a cytoplasmic promiscuous immunogenic DNA/RNA sensor. Negatively regulates B-cell and myeloid cell differentiation. In hematopoietic stem cells may regulate the balance between self-renewal and differentiation. Involved in negative regulation of canonical Wnt signaling. The sequence is that of High mobility group protein B3 (Hmgb3) from Mus musculus (Mouse).